A 438-amino-acid polypeptide reads, in one-letter code: Malic acid transport protein (438 aa).

10 helical membrane-spanning segments follow: residues 37–57 (SWFACTMATGGVGLIIGSFPF), 65–85 (IGKIVYILQIFLFSLFGSCML), 106–126 (LFIATCLLSISTFIDMLAIYA), 140–160 (ILYYIYVAVSFIYCVMAFFTI), 172–192 (SPAWILPIFPPMICGVIAGAV), 205–225 (VIFGILFQGLGFWVYLLLFAV), 242–262 (PGMFMFVGPPAFSGLALINIA), 288–308 (FMAIFIWGLAAWCYCLAMVSF), 321–341 (ACGWFAFIFPNVGFVNCTIEI), and 353–373 (FGHIIGVILCIQWILLMYLMV). The interval 390–438 (AHPPPKPNTGVLNPTFPPEKAPASLEKVDTHVTSTGGESDPPSSEHESV) is disordered. Phosphoserine occurs at positions 413, 423, 428, 432, 433, and 437.

It belongs to the tellurite-resistance/dicarboxylate transporter (TDT) family.

It is found in the membrane. In terms of biological role, permease for malate and other C4 dicarboxylic acids. This is Malic acid transport protein (mae1) from Schizosaccharomyces pombe (strain 972 / ATCC 24843) (Fission yeast).